We begin with the raw amino-acid sequence, 279 residues long: Putative biopolymer transport protein ExbB homolog (279 aa).

Transmembrane regions (helical) follow at residues 19–39 (SGGVITYLIAAIGIYGFITAL), 126–146 (IIEVAPMLGLIGTVIGIWYTF), and 162–182 (IYVALITTILGLAVAIILMPL).

Belongs to the ExbB/TolQ family.

It is found in the cell membrane. This Methanothermobacter thermautotrophicus (strain ATCC 29096 / DSM 1053 / JCM 10044 / NBRC 100330 / Delta H) (Methanobacterium thermoautotrophicum) protein is Putative biopolymer transport protein ExbB homolog.